A 360-amino-acid polypeptide reads, in one-letter code: Phospho-N-acetylmuramoyl-pentapeptide-transferase (360 aa).

Helical transmembrane passes span 21–41 (YLSF…LWMG), 73–93 (TMGG…WADL), 94–114 (SNPY…VGFV), 132–152 (WKYF…YAHG), 168–188 (VMPQ…VGTS), 199–219 (GLAI…AWAT), 239–259 (LVVV…FNTY), 263–283 (VFMG…IAVL), 288–308 (LVLV…ILQV), and 338–358 (VIVR…ATLK).

It belongs to the glycosyltransferase 4 family. MraY subfamily. Mg(2+) serves as cofactor.

Its subcellular location is the cell inner membrane. The catalysed reaction is UDP-N-acetyl-alpha-D-muramoyl-L-alanyl-gamma-D-glutamyl-meso-2,6-diaminopimeloyl-D-alanyl-D-alanine + di-trans,octa-cis-undecaprenyl phosphate = di-trans,octa-cis-undecaprenyl diphospho-N-acetyl-alpha-D-muramoyl-L-alanyl-D-glutamyl-meso-2,6-diaminopimeloyl-D-alanyl-D-alanine + UMP. The protein operates within cell wall biogenesis; peptidoglycan biosynthesis. Functionally, catalyzes the initial step of the lipid cycle reactions in the biosynthesis of the cell wall peptidoglycan: transfers peptidoglycan precursor phospho-MurNAc-pentapeptide from UDP-MurNAc-pentapeptide onto the lipid carrier undecaprenyl phosphate, yielding undecaprenyl-pyrophosphoryl-MurNAc-pentapeptide, known as lipid I. This chain is Phospho-N-acetylmuramoyl-pentapeptide-transferase, found in Vibrio atlanticus (strain LGP32) (Vibrio splendidus (strain Mel32)).